Consider the following 566-residue polypeptide: NAD-dependent malic enzyme (566 aa).

Y105 acts as the Proton donor in catalysis. R158 contacts NAD(+). Residue K176 is the Proton acceptor of the active site. A divalent metal cation contacts are provided by E247, D248, and D271. NAD(+) contacts are provided by D271 and N419.

Belongs to the malic enzymes family. Homotetramer. It depends on Mg(2+) as a cofactor. Requires Mn(2+) as cofactor.

The enzyme catalyses (S)-malate + NAD(+) = pyruvate + CO2 + NADH. It carries out the reaction oxaloacetate + H(+) = pyruvate + CO2. This is NAD-dependent malic enzyme from Acinetobacter baylyi (strain ATCC 33305 / BD413 / ADP1).